A 176-amino-acid chain; its full sequence is Crossover junction endodeoxyribonuclease RuvC (176 aa).

Catalysis depends on residues Asp9, Glu69, and Asp141. The Mg(2+) site is built by Asp9, Glu69, and Asp141.

This sequence belongs to the RuvC family. Homodimer which binds Holliday junction (HJ) DNA. The HJ becomes 2-fold symmetrical on binding to RuvC with unstacked arms; it has a different conformation from HJ DNA in complex with RuvA. In the full resolvosome a probable DNA-RuvA(4)-RuvB(12)-RuvC(2) complex forms which resolves the HJ. Mg(2+) serves as cofactor.

It localises to the cytoplasm. It catalyses the reaction Endonucleolytic cleavage at a junction such as a reciprocal single-stranded crossover between two homologous DNA duplexes (Holliday junction).. Its function is as follows. The RuvA-RuvB-RuvC complex processes Holliday junction (HJ) DNA during genetic recombination and DNA repair. Endonuclease that resolves HJ intermediates. Cleaves cruciform DNA by making single-stranded nicks across the HJ at symmetrical positions within the homologous arms, yielding a 5'-phosphate and a 3'-hydroxyl group; requires a central core of homology in the junction. The consensus cleavage sequence is 5'-(A/T)TT(C/G)-3'. Cleavage occurs on the 3'-side of the TT dinucleotide at the point of strand exchange. HJ branch migration catalyzed by RuvA-RuvB allows RuvC to scan DNA until it finds its consensus sequence, where it cleaves and resolves the cruciform DNA. This is Crossover junction endodeoxyribonuclease RuvC from Chromobacterium violaceum (strain ATCC 12472 / DSM 30191 / JCM 1249 / CCUG 213 / NBRC 12614 / NCIMB 9131 / NCTC 9757 / MK).